Reading from the N-terminus, the 177-residue chain is Large ribosomal subunit protein uL6 (177 aa).

It belongs to the universal ribosomal protein uL6 family. In terms of assembly, part of the 50S ribosomal subunit.

Functionally, this protein binds to the 23S rRNA, and is important in its secondary structure. It is located near the subunit interface in the base of the L7/L12 stalk, and near the tRNA binding site of the peptidyltransferase center. The protein is Large ribosomal subunit protein uL6 of Cereibacter sphaeroides (strain ATCC 17029 / ATH 2.4.9) (Rhodobacter sphaeroides).